The chain runs to 66 residues: Large ribosomal subunit protein bL33c (66 aa).

This sequence belongs to the bacterial ribosomal protein bL33 family.

The protein resides in the plastid. Its subcellular location is the chloroplast. This is Large ribosomal subunit protein bL33c from Lobularia maritima (Sweet alyssum).